A 187-amino-acid chain; its full sequence is Elongation factor P (187 aa).

This sequence belongs to the elongation factor P family.

The protein localises to the cytoplasm. It functions in the pathway protein biosynthesis; polypeptide chain elongation. Its function is as follows. Involved in peptide bond synthesis. Stimulates efficient translation and peptide-bond synthesis on native or reconstituted 70S ribosomes in vitro. Probably functions indirectly by altering the affinity of the ribosome for aminoacyl-tRNA, thus increasing their reactivity as acceptors for peptidyl transferase. This Mycobacterium bovis (strain ATCC BAA-935 / AF2122/97) protein is Elongation factor P (efp).